Reading from the N-terminus, the 96-residue chain is Large ribosomal subunit protein uL23 (96 aa).

Belongs to the universal ribosomal protein uL23 family. In terms of assembly, part of the 50S ribosomal subunit. Contacts protein L29, and trigger factor when it is bound to the ribosome.

In terms of biological role, one of the early assembly proteins it binds 23S rRNA. One of the proteins that surrounds the polypeptide exit tunnel on the outside of the ribosome. Forms the main docking site for trigger factor binding to the ribosome. The sequence is that of Large ribosomal subunit protein uL23 from Onion yellows phytoplasma (strain OY-M).